An 81-amino-acid polypeptide reads, in one-letter code: Weak neurotoxin OH-72 (81 aa).

The N-terminal stretch at 1–16 (LTLVVVTIVCLDLGYT) is a signal peptide. 5 cysteine pairs are disulfide-bonded: C19-C40, C22-C27, C33-C58, C62-C73, and C74-C79.

The protein belongs to the three-finger toxin family. Ancestral subfamily. Orphan group II sub-subfamily. Expressed by the venom gland.

The protein resides in the secreted. Functionally, binds with low affinity to muscular (alpha-1-beta-1-delta-epsilon/CHRNA1-CHRNB1-CHRND-CHRNE) and very low affinity to neuronal (alpha-7/CHRNA7) nicotinic acetylcholine receptor (nAChR). The protein is Weak neurotoxin OH-72 of Ophiophagus hannah (King cobra).